Here is a 350-residue protein sequence, read N- to C-terminus: Secreted effector protein PipB2 (350 aa).

Pentapeptide repeat domains lie at 162–201 (ANLT…NLSG), 202–241 (TSLG…SLLG), 247–286 (CNCS…IMED), and 287–326 (AVLT…TLTH).

Interacts with the host kinesin light chain (KLC), a subunit of the kinesin-1 motor complex.

The protein localises to the secreted. The protein resides in the host membrane. Its function is as follows. Effector proteins function to alter host cell physiology and promote bacterial survival in host tissues. Involved in the reorganization of late endosome/lysosome (LE/Lys) compartments in mammalian cells. Necessary and sufficient to link kinesin-1 onto the Salmonella-containing vacuole (SCV) membrane. Required for centrifugal extension of lysosomal glycoprotein-rich membrane tubules, known as Salmonella-induced filaments (Sifs), away from the SCV and toward the cell periphery. Required for virulence, but not for intracellular survival and replication in phagocytic cells. This is Secreted effector protein PipB2 (pipB2) from Salmonella choleraesuis (strain SC-B67).